The primary structure comprises 175 residues: NADH-ubiquinone oxidoreductase chain 6 (175 aa).

Transmembrane regions (helical) follow at residues 1–21 (MMTYIVFILSTVFVVGFVGFS), 27–47 (VYGGVGLIVSGGVGCGIIMNF), 49–69 (GSFLGLMVFLIYLGGMMVVFG), 88–108 (VVFGAFVFGLFMEMLLVLYVL), and 149–169 (YGMWLVVVTGWSLFIAVVVVM).

The protein belongs to the complex I subunit 6 family. Core subunit of respiratory chain NADH dehydrogenase (Complex I) which is composed of 45 different subunits.

It localises to the mitochondrion inner membrane. The enzyme catalyses a ubiquinone + NADH + 5 H(+)(in) = a ubiquinol + NAD(+) + 4 H(+)(out). Its function is as follows. Core subunit of the mitochondrial membrane respiratory chain NADH dehydrogenase (Complex I) which catalyzes electron transfer from NADH through the respiratory chain, using ubiquinone as an electron acceptor. Essential for the catalytic activity and assembly of complex I. The sequence is that of NADH-ubiquinone oxidoreductase chain 6 (MT-ND6) from Pteropus scapulatus (Little red flying fox).